Here is a 187-residue protein sequence, read N- to C-terminus: Translation initiation factor IF-3 (187 aa).

It belongs to the IF-3 family. As to quaternary structure, monomer.

The protein resides in the cytoplasm. Its function is as follows. IF-3 binds to the 30S ribosomal subunit and shifts the equilibrium between 70S ribosomes and their 50S and 30S subunits in favor of the free subunits, thus enhancing the availability of 30S subunits on which protein synthesis initiation begins. In Leptospira biflexa serovar Patoc (strain Patoc 1 / Ames), this protein is Translation initiation factor IF-3.